We begin with the raw amino-acid sequence, 51 residues long: Structural protein ORF5a (51 aa).

A helical membrane pass occupies residues 11-28 (RGLLLAIAFFVVYRAVLF).

It belongs to the arteriviridae ORF5a protein family. In terms of assembly, interacts with GP2b and GP4.

The protein localises to the virion. The protein resides in the host cell membrane. In terms of biological role, minor virion component that plays an essential role in virus infectivity. The polypeptide is Structural protein ORF5a (Porcine reproductive and respiratory syndrome virus (strain VR-2332) (PRRSV)).